Here is a 128-residue protein sequence, read N- to C-terminus: Small ribosomal subunit protein uS11 (128 aa).

This sequence belongs to the universal ribosomal protein uS11 family. In terms of assembly, part of the 30S ribosomal subunit. Interacts with proteins S7 and S18. Binds to IF-3.

Functionally, located on the platform of the 30S subunit, it bridges several disparate RNA helices of the 16S rRNA. Forms part of the Shine-Dalgarno cleft in the 70S ribosome. This Wolbachia pipientis subsp. Culex pipiens (strain wPip) protein is Small ribosomal subunit protein uS11.